The sequence spans 437 residues: tRNA modification GTPase MnmE (437 aa).

Arginine 21, glutamate 79, and arginine 119 together coordinate (6S)-5-formyl-5,6,7,8-tetrahydrofolate. The TrmE-type G domain occupies 223–364; that stretch reads GFRVVLAGPP…FRSALIAHAR (142 aa). GTP contacts are provided by residues 233-238, 252-258, and 277-280; these read NAGKST, AAEPGTT, and DTAG. The Mg(2+) site is built by serine 237 and threonine 258. Lysine 437 provides a ligand contact to (6S)-5-formyl-5,6,7,8-tetrahydrofolate.

The protein belongs to the TRAFAC class TrmE-Era-EngA-EngB-Septin-like GTPase superfamily. TrmE GTPase family. In terms of assembly, homodimer. Heterotetramer of two MnmE and two MnmG subunits. It depends on K(+) as a cofactor.

The protein localises to the cytoplasm. Functionally, exhibits a very high intrinsic GTPase hydrolysis rate. Involved in the addition of a carboxymethylaminomethyl (cmnm) group at the wobble position (U34) of certain tRNAs, forming tRNA-cmnm(5)s(2)U34. In Novosphingobium aromaticivorans (strain ATCC 700278 / DSM 12444 / CCUG 56034 / CIP 105152 / NBRC 16084 / F199), this protein is tRNA modification GTPase MnmE.